The sequence spans 158 residues: MSSEFTHINADGNAHMVDVTEKAVTEREARAEAFIEMAPETLEMIMSGSHHKGDVFATARIAGIQAAKKTSDLIPLCHPLMLTKVEVDLEAQPAHHRVRITSLCKLSGKTGVEMEALTAASVAALTIYDMCKAVQKDMVISQTRLLEKRGGKSGHFKV.

Residues 76 to 78 (LCH) and 114 to 115 (ME) contribute to the substrate site. D129 is an active-site residue.

Belongs to the MoaC family. Homohexamer; trimer of dimers.

The catalysed reaction is (8S)-3',8-cyclo-7,8-dihydroguanosine 5'-triphosphate = cyclic pyranopterin phosphate + diphosphate. Its pathway is cofactor biosynthesis; molybdopterin biosynthesis. Catalyzes the conversion of (8S)-3',8-cyclo-7,8-dihydroguanosine 5'-triphosphate to cyclic pyranopterin monophosphate (cPMP). This is Cyclic pyranopterin monophosphate synthase from Shewanella loihica (strain ATCC BAA-1088 / PV-4).